The primary structure comprises 901 residues: Valine--tRNA ligase (901 aa).

Residues 1–37 are disordered; sequence MLPGCYTHRLNMSDTQDPPQDESTTDESADALDGEYD. The segment covering 19-35 has biased composition (acidic residues); sequence PQDESTTDESADALDGE. A 'HIGH' region motif is present at residues 72 to 82; the sequence is PTVSGNLHMGH. A 'KMSKS' region motif is present at residues 572–576; sequence AMSKS. Lys575 contacts ATP.

The protein belongs to the class-I aminoacyl-tRNA synthetase family. ValS type 2 subfamily.

It localises to the cytoplasm. The catalysed reaction is tRNA(Val) + L-valine + ATP = L-valyl-tRNA(Val) + AMP + diphosphate. Functionally, catalyzes the attachment of valine to tRNA(Val). As ValRS can inadvertently accommodate and process structurally similar amino acids such as threonine, to avoid such errors, it has a 'posttransfer' editing activity that hydrolyzes mischarged Thr-tRNA(Val) in a tRNA-dependent manner. The protein is Valine--tRNA ligase of Haloarcula marismortui (strain ATCC 43049 / DSM 3752 / JCM 8966 / VKM B-1809) (Halobacterium marismortui).